Here is a 602-residue protein sequence, read N- to C-terminus: Elongation factor 4 (602 aa).

Residues 8–189 (KNIRNFSIIA…KIITTIPAPS (182 aa)) enclose the tr-type G domain. Residues 20–25 (DHGKST) and 136–139 (NKID) each bind GTP.

The protein belongs to the TRAFAC class translation factor GTPase superfamily. Classic translation factor GTPase family. LepA subfamily.

It localises to the cell inner membrane. The catalysed reaction is GTP + H2O = GDP + phosphate + H(+). Required for accurate and efficient protein synthesis under certain stress conditions. May act as a fidelity factor of the translation reaction, by catalyzing a one-codon backward translocation of tRNAs on improperly translocated ribosomes. Back-translocation proceeds from a post-translocation (POST) complex to a pre-translocation (PRE) complex, thus giving elongation factor G a second chance to translocate the tRNAs correctly. Binds to ribosomes in a GTP-dependent manner. This is Elongation factor 4 from Helicobacter pylori (strain G27).